A 474-amino-acid polypeptide reads, in one-letter code: MTLKIAFFTLILLVSIERVYSSDEEYRLLKDLREGYDPVERPVADHRKPVNVKLRLILQQLVDVDERNQVITLVVWNQYTWNDYKLRWSPEEYGNITTLQIPHGTLWKPDILLFNSANEHFDASFPVHMVVSSNGDVLFAPPGIVSFSCSLSMTWFPYDQQVCYLKFGSWTYGKKLDLQIDDSDLPDGHKMDLQYYIPNGEFDLLATPAFRKSTTFLDETYVELYFHMHLKRRTMYYGLNWIVPSILISLSNILGFTMPPECGEKITLQITNFLSVMVFLAMVSEVAPPTSESIPIIAAFFSLSIVILGLSICASLIIVNIFFRHPKTHRMGDWTRYVFLEWLPWFLLMSRPEHTFCRPRREEEKNDEEAGGDGTKLLENQQHQPRPRLLVNSQLVMDSTVPYLEEIIGYLKVFKAKLDDDEEEEEEILNWRFMAMVIDRLSLFLFTGLIFGTTALIFAFCPNLFTDSPIVDIE.

The first 21 residues, 1-21 (MTLKIAFFTLILLVSIERVYS), serve as a signal peptide directing secretion. Residues 22-237 (SDEEYRLLKD…MHLKRRTMYY (216 aa)) are Extracellular-facing. A glycan (N-linked (GlcNAc...) asparagine) is linked at Asn-95. Residues Cys-149 and Cys-163 are joined by a disulfide bond. Transmembrane regions (helical) follow at residues 238–258 (GLNWIVPSILISLSNILGFTM), 266–286 (ITLQITNFLSVMVFLAMVSEV), and 303–323 (LSIVILGLSICASLIIVNIFF). Residues 324 to 440 (RHPKTHRMGD…WRFMAMVIDR (117 aa)) are Cytoplasmic-facing. The interval 359-378 (PRREEEKNDEEAGGDGTKLL) is disordered. A helical membrane pass occupies residues 441 to 461 (LSLFLFTGLIFGTTALIFAFC).

This sequence belongs to the ligand-gated ion channel (TC 1.A.9) family. Acetylcholine receptor (TC 1.A.9.1) subfamily. As to quaternary structure, neuronal AChR seems to be composed of two different type of subunits: alpha and beta. In terms of tissue distribution, expressed in pharyngeal muscle.

It is found in the postsynaptic cell membrane. The protein localises to the cell membrane. Its function is as follows. After binding acetylcholine, the AChR responds by an extensive change in conformation that affects all subunits and leads to opening of an ion-conducting channel across the plasma membrane. Nicotinic acetylcholine receptor in the MC pharyngeal motor neuron involved in pharyngeal pumping. Has a role in the determination of life span possibly via calorific restriction which affects growth rate, although this is independent of metabolic activity. Plays a role in the defense against the accumulation of ingested live pathogenic bacteria in the intestine. This Caenorhabditis elegans protein is Neuronal acetylcholine receptor subunit eat-2.